The sequence spans 1188 residues: MEQPDLSSVAISKPLLKLKLLDALRQGSFPNLQDLLKKQFQPLDDPNVQQVLHLMLHYAVQVAPMAVIKEIVHHWVSTTNTTFLNIHLDLNERDSNGNTPLHIAAYQSRGDIVAFLLDQPTINDCVLNNSHLQAIEMCKNLNIAQMMQVKRSTYVAETAQEFRTAFNNRDFGHLESILSSPRNAELLDINGMDPETGDTVLHEFVKKRDVIMCRWLLEHGADPFKRDRKGKLPIELVRKVNENDTATNTKIAIDIELKKLLERATREQSVIDVTNNNLHEAPTYKGYLKKWTNFAQGYKLRWFILSSDGKLSYYIDQADTKNACRGSLNMSSCSLHLDSSEKLKFEIIGGNNGVIRWHLKGNHPIETNRWVWAIQGAIRYAKDREILLHNGPYSPSLALSHGLSSKVSNKENLHATSKRLTKSPHLSKSTLTQNDHDNDDDSTNNNNNKSNNDYDDNNNNNNNDDDDYDDDDESRPLIEPLPLISSRSQSLSEITPGPHSRKSTVSSTRAADIPSDDEGYSEDDSDDDGNSSYTMENGGENDGDEDLNAIYGPYIQKLHMLQRSISIELASLNELLQDKQQHDEYWNTVNTSIETVSEFFDKLNRLTSQREKRMIAQMTKQRDVNNVWIQSVKDLEMELVDKDEKLVALDKERKNLKKMLQKKLNNQPQVETEANEESDDANSMIKGSQESTNTLEEIVKFIEATKESDEDSDADEFFDAEEAASDKKANDSEDLTTNKETPANAKPQEEAPEDESLIVISSPQVEKKNQLLKEGSFVGYEDPVRTKLALDEDNRPKIGLWSVLKSMVGQDLTKLTLPVSFNEPTSLLQRVSEDIEYSHILDQAATFEDSSLRMLYVAAFTASMYASTTNRVSKPFNPLLGETFEYARTDGQYRFFTEQVSHHPPISATWTESPKWDFYGECNVDSSFNGRTFAVQHLGLWYITIRPDHNISVPEETYSWKKPNNTVIGILMGKPQVDNSGDVKVTNHTTGDYCMLHYKAHGWTSAGAYEVRGEVFNKDDKKLWVLGGHWNDSIYGKKVTARGGELTLDRIKTANSATGGPKLDGSKFLIWKANERPSVPFNLTSFALTLNALPPHLIPYLAPTDSRLRPDQRAMENGEYDKAAAEKHRVEVKQRAAKKEREQKGEEYRPKWFVQEEHPVTKSLYWKFNGEYWNKRKNHDFKDCADIF.

ANK repeat units lie at residues 51–80, 96–125, and 196–225; these read VLHL…STTN, NGNT…INDC, and TGDT…DPFK. In terms of domain architecture, PH spans 330–379; sequence MSSCSLHLDSSEKLKFEIIGGNNGVIRWHLKGNHPIETNRWVWAIQGAIR. A Phosphoserine modification is found at S394. Disordered stretches follow at residues 415-546 and 661-692; these read ATSK…GDED and QKKL…QEST. Over residues 424-433 the composition is skewed to polar residues; that stretch reads PHLSKSTLTQ. A compositionally biased stretch (low complexity) spans 443 to 462; the sequence is TNNNNNKSNNDYDDNNNNNN. Residues 463 to 473 are compositionally biased toward acidic residues; the sequence is NDDDDYDDDDE. A phosphoserine mark is found at S490 and S500. Acidic residues predominate over residues 514–529; the sequence is PSDDEGYSEDDSDDDG. A phosphoserine mark is found at S678, S683, and S691. Phosphothreonine occurs at positions 692 and 694. Phosphoserine occurs at positions 708 and 712. The short motif at 716 to 722 is the FFAT element; sequence EFFDAEE. The segment at 721-755 is disordered; sequence EEAASDKKANDSEDLTTNKETPANAKPQEEAPEDE. The segment at 800-1174 is OSBP-related domain (ORD); sequence LWSVLKSMVG…YWKFNGEYWN (375 aa). Residues D834 and K962 each contribute to the ergosterol site.

It belongs to the OSBP family. As to quaternary structure, interacts with NVJ1. Interacts with the AAA ATPase AFG2; regulates OSH1 membrane association. AFG2 is required for membrane dissociation of OSH1. Interacts with SCS2.

It localises to the golgi apparatus membrane. The protein localises to the nucleus outer membrane. Its subcellular location is the endoplasmic reticulum membrane. It is found in the vacuole membrane. In terms of biological role, lipid transport protein (LTP) involved in non-vesicular transfer of lipids between membranes. Functions in phosphoinositide-coupled directional transport of various lipids by carrying the lipid molecule in a hydrophobic pocket and transferring it between membranes through the cytosol. Involved in maintenance of intracellular sterol distribution and homeostasis. Involved in non-vesicular transport of ergosterol and PI(4)P at the NVJ. Binds sterol and PI4P in a mutually exclusive manner. May be involved in formation of PMN vesicles by altering the membrane lipid composition. The polypeptide is Oxysterol-binding protein homolog 1 (Saccharomyces cerevisiae (strain ATCC 204508 / S288c) (Baker's yeast)).